Here is a 372-residue protein sequence, read N- to C-terminus: MPLPDFHVSEPFTLGIELEMQVVNPPGYDLSQDSSMLIDAVKNQITAGEVKHDITESMLELATDVCRDINQAAGQFSAMQKVVLQAAADHHLEICGGGTHPFQKWQRQEVCDNERYQRTLENFGYLIQQATVFGQHVHVGCASGDDAIYLLHGLSRFVPHFIALSAASPYMQGTDTRFASSRPNIFSAFPDNGPMPWVSNWQQFEALFRCLSYTTMIDSIKDLHWDIRPSPHFGTVEVRVMDTPLTLSHAVNMAGLIQATAHWLLTERPFKHQEKDYLLYKFNRFQACRYGLEGVITDPHTGDRRSLTEATLRLLEKIAPSAHKIGASSAIEALHRQVVSGLNEAQLMRDFVADGGSLIGLVKKHCEIWAGE.

This sequence belongs to the glutamate--cysteine ligase type 2 family. YbdK subfamily. In terms of assembly, homodimer.

It catalyses the reaction L-cysteine + L-glutamate + ATP = gamma-L-glutamyl-L-cysteine + ADP + phosphate + H(+). Its function is as follows. ATP-dependent carboxylate-amine ligase which exhibits weak glutamate--cysteine ligase activity. This is Putative glutamate--cysteine ligase 2 (ybdK) from Escherichia coli O1:K1 / APEC.